A 464-amino-acid polypeptide reads, in one-letter code: V-type ATP synthase beta chain (464 aa).

It belongs to the ATPase alpha/beta chains family.

Its function is as follows. Produces ATP from ADP in the presence of a proton gradient across the membrane. The V-type beta chain is a regulatory subunit. The polypeptide is V-type ATP synthase beta chain (Streptococcus gordonii (strain Challis / ATCC 35105 / BCRC 15272 / CH1 / DL1 / V288)).